Reading from the N-terminus, the 245-residue chain is Adenosylcobinamide-GDP ribazoletransferase (245 aa).

5 helical membrane-spanning segments follow: residues 31-51, 61-81, 113-133, 138-158, and 192-212; these read FGRA…VLYA, PLLQ…ALHL, VAVV…AALL, AGLL…LFLT, and LAFG…FAWL.

The protein belongs to the CobS family. It depends on Mg(2+) as a cofactor.

It is found in the cell inner membrane. It catalyses the reaction alpha-ribazole + adenosylcob(III)inamide-GDP = adenosylcob(III)alamin + GMP + H(+). It carries out the reaction alpha-ribazole 5'-phosphate + adenosylcob(III)inamide-GDP = adenosylcob(III)alamin 5'-phosphate + GMP + H(+). It functions in the pathway cofactor biosynthesis; adenosylcobalamin biosynthesis; adenosylcobalamin from cob(II)yrinate a,c-diamide: step 7/7. Functionally, joins adenosylcobinamide-GDP and alpha-ribazole to generate adenosylcobalamin (Ado-cobalamin). Also synthesizes adenosylcobalamin 5'-phosphate from adenosylcobinamide-GDP and alpha-ribazole 5'-phosphate. In Pseudomonas aeruginosa (strain ATCC 15692 / DSM 22644 / CIP 104116 / JCM 14847 / LMG 12228 / 1C / PRS 101 / PAO1), this protein is Adenosylcobinamide-GDP ribazoletransferase.